Here is a 122-residue protein sequence, read N- to C-terminus: Small ribosomal subunit protein uS10y (122 aa).

The protein belongs to the universal ribosomal protein uS10 family.

In Arabidopsis thaliana (Mouse-ear cress), this protein is Small ribosomal subunit protein uS10y (RPS20B).